Consider the following 86-residue polypeptide: Putative regulatory protein BBR47_37350 (86 aa).

The protein belongs to the RemA family.

This Brevibacillus brevis (strain 47 / JCM 6285 / NBRC 100599) protein is Putative regulatory protein BBR47_37350.